Here is a 574-residue protein sequence, read N- to C-terminus: Glycine--tRNA ligase (574 aa).

The substrate site is built by Arg-96 and Glu-162. Residues 194-196 (RNE), 204-209 (IRLREF), 327-328 (EC), and 450-453 (GIDR) each bind ATP. Substrate is bound at residue 209–213 (FTQAE). 446–450 (EPSYG) serves as a coordination point for substrate.

It belongs to the class-II aminoacyl-tRNA synthetase family.

The protein localises to the cytoplasm. The enzyme catalyses tRNA(Gly) + glycine + ATP = glycyl-tRNA(Gly) + AMP + diphosphate. Its function is as follows. Catalyzes the attachment of glycine to tRNA(Gly). This chain is Glycine--tRNA ligase, found in Methanococcus maripaludis (strain DSM 14266 / JCM 13030 / NBRC 101832 / S2 / LL).